A 595-amino-acid chain; its full sequence is UvrABC system protein C (595 aa).

The region spanning 14 to 91 (DSPGCYIHKD…IQENKPKYNI (78 aa)) is the GIY-YIG domain. One can recognise a UVR domain in the interval 196–231 (DKIVNELRDKMTKASELMEFERAAEYRDLIEGIGLL).

The protein belongs to the UvrC family. Interacts with UvrB in an incision complex.

The protein localises to the cytoplasm. Its function is as follows. The UvrABC repair system catalyzes the recognition and processing of DNA lesions. UvrC both incises the 5' and 3' sides of the lesion. The N-terminal half is responsible for the 3' incision and the C-terminal half is responsible for the 5' incision. The chain is UvrABC system protein C from Streptococcus mutans serotype c (strain ATCC 700610 / UA159).